A 129-amino-acid polypeptide reads, in one-letter code: Transcription antitermination protein NusB (129 aa).

This sequence belongs to the NusB family.

In terms of biological role, involved in transcription antitermination. Required for transcription of ribosomal RNA (rRNA) genes. Binds specifically to the boxA antiterminator sequence of the ribosomal RNA (rrn) operons. The sequence is that of Transcription antitermination protein NusB from Staphylococcus aureus (strain MRSA252).